The following is a 103-amino-acid chain: Small ribosomal subunit protein uS10 (103 aa).

This sequence belongs to the universal ribosomal protein uS10 family. As to quaternary structure, part of the 30S ribosomal subunit.

Involved in the binding of tRNA to the ribosomes. This Borreliella burgdorferi (strain ATCC 35210 / DSM 4680 / CIP 102532 / B31) (Borrelia burgdorferi) protein is Small ribosomal subunit protein uS10.